Consider the following 341-residue polypeptide: tRNA N6-adenosine threonylcarbamoyltransferase (341 aa).

Fe cation contacts are provided by histidine 119 and histidine 123. Substrate is bound by residues 141-145, aspartate 174, glycine 187, and asparagine 279; that span reads MVSGG. Aspartate 307 contributes to the Fe cation binding site.

It belongs to the KAE1 / TsaD family. It depends on Fe(2+) as a cofactor.

The protein localises to the cytoplasm. The catalysed reaction is L-threonylcarbamoyladenylate + adenosine(37) in tRNA = N(6)-L-threonylcarbamoyladenosine(37) in tRNA + AMP + H(+). In terms of biological role, required for the formation of a threonylcarbamoyl group on adenosine at position 37 (t(6)A37) in tRNAs that read codons beginning with adenine. Is involved in the transfer of the threonylcarbamoyl moiety of threonylcarbamoyl-AMP (TC-AMP) to the N6 group of A37, together with TsaE and TsaB. TsaD likely plays a direct catalytic role in this reaction. The polypeptide is tRNA N6-adenosine threonylcarbamoyltransferase (Oenococcus oeni (strain ATCC BAA-331 / PSU-1)).